Reading from the N-terminus, the 634-residue chain is Chaperone protein DnaK (634 aa).

Threonine 197 carries the post-translational modification Phosphothreonine; by autocatalysis. A disordered region spans residues 592–634 (IGSSVYQQPGNQPPAPGGPNANASDDKGPDDDVIDADFTETKD). Acidic residues predominate over residues 619 to 634 (GPDDDVIDADFTETKD).

It belongs to the heat shock protein 70 family.

Functionally, acts as a chaperone. The polypeptide is Chaperone protein DnaK (Prochlorococcus marinus (strain MIT 9515)).